A 459-amino-acid chain; its full sequence is Methylenetetrahydrofolate--tRNA-(uracil-5-)-methyltransferase TrmFO (459 aa).

An FAD-binding site is contributed by 26-31 (GGGLAG).

This sequence belongs to the MnmG family. TrmFO subfamily. It depends on FAD as a cofactor.

It localises to the cytoplasm. It carries out the reaction uridine(54) in tRNA + (6R)-5,10-methylene-5,6,7,8-tetrahydrofolate + NADH + H(+) = 5-methyluridine(54) in tRNA + (6S)-5,6,7,8-tetrahydrofolate + NAD(+). The enzyme catalyses uridine(54) in tRNA + (6R)-5,10-methylene-5,6,7,8-tetrahydrofolate + NADPH + H(+) = 5-methyluridine(54) in tRNA + (6S)-5,6,7,8-tetrahydrofolate + NADP(+). Catalyzes the folate-dependent formation of 5-methyl-uridine at position 54 (M-5-U54) in all tRNAs. This Synechococcus sp. (strain JA-2-3B'a(2-13)) (Cyanobacteria bacterium Yellowstone B-Prime) protein is Methylenetetrahydrofolate--tRNA-(uracil-5-)-methyltransferase TrmFO.